A 339-amino-acid chain; its full sequence is Beta-ketoacyl-[acyl-carrier-protein] synthase III (339 aa).

Active-site residues include C121 and H257. Positions 258–262 (QANLR) are ACP-binding. The active site involves N288.

The protein belongs to the thiolase-like superfamily. FabH family. As to quaternary structure, homodimer.

It localises to the cytoplasm. The catalysed reaction is malonyl-[ACP] + propanoyl-CoA + H(+) = 3-oxopentanoyl-[ACP] + CO2 + CoA. It carries out the reaction 2-methylpropanoyl-CoA + malonyl-[ACP] + H(+) = 4-methyl-3-oxopentanoyl-[ACP] + CO2 + CoA. The enzyme catalyses malonyl-[ACP] + acetyl-CoA + H(+) = 3-oxobutanoyl-[ACP] + CO2 + CoA. It catalyses the reaction butanoyl-CoA + malonyl-[ACP] + H(+) = 3-oxohexanoyl-[ACP] + CO2 + CoA. Its pathway is lipid metabolism; fatty acid biosynthesis. In terms of biological role, catalyzes the condensation reaction of fatty acid synthesis by the addition to an acyl acceptor of two carbons from malonyl-ACP. Catalyzes the first condensation reaction which initiates fatty acid synthesis and may therefore play a role in governing the total rate of fatty acid production. Possesses both acetoacetyl-ACP synthase and acetyl transacylase activities. Propionyl-CoA and isobutyryl-CoA were the two most preferred substrates, although acetyl-CoA and butyryl-CoA could also be accepted and elongated. Involved in the biosynthesis of R1128 polyketide. In Streptomyces lividans, this protein is Beta-ketoacyl-[acyl-carrier-protein] synthase III.